Reading from the N-terminus, the 364-residue chain is Probable dual-specificity RNA methyltransferase RlmN (364 aa).

E107 (proton acceptor) is an active-site residue. The 234-residue stretch at 113–346 (HEYGNSVCVT…ATIRREQGSD (234 aa)) folds into the Radical SAM core domain. A disulfide bridge links C120 with C351. Residues C127, C131, and C134 each contribute to the [4Fe-4S] cluster site. Residues 177–178 (GE), S209, 232–234 (SLH), and N308 contribute to the S-adenosyl-L-methionine site. C351 acts as the S-methylcysteine intermediate in catalysis.

The protein belongs to the radical SAM superfamily. RlmN family. [4Fe-4S] cluster serves as cofactor.

The protein resides in the cytoplasm. The catalysed reaction is adenosine(2503) in 23S rRNA + 2 reduced [2Fe-2S]-[ferredoxin] + 2 S-adenosyl-L-methionine = 2-methyladenosine(2503) in 23S rRNA + 5'-deoxyadenosine + L-methionine + 2 oxidized [2Fe-2S]-[ferredoxin] + S-adenosyl-L-homocysteine. It catalyses the reaction adenosine(37) in tRNA + 2 reduced [2Fe-2S]-[ferredoxin] + 2 S-adenosyl-L-methionine = 2-methyladenosine(37) in tRNA + 5'-deoxyadenosine + L-methionine + 2 oxidized [2Fe-2S]-[ferredoxin] + S-adenosyl-L-homocysteine. Functionally, specifically methylates position 2 of adenine 2503 in 23S rRNA and position 2 of adenine 37 in tRNAs. Confers resistance to some classes of antibiotics. The chain is Probable dual-specificity RNA methyltransferase RlmN from Staphylococcus epidermidis (strain ATCC 12228 / FDA PCI 1200).